Consider the following 315-residue polypeptide: Protein-export membrane protein SecF (315 aa).

The next 6 helical transmembrane spans lie at 35 to 55 (MVLY…VHFP), 152 to 172 (QGIK…FLFF), 181 to 201 (IIFS…ILGI), 205 to 225 (TATI…NILL), 242 to 264 (LSAV…ILWL), and 282 to 302 (LLAD…WYIA).

Belongs to the SecD/SecF family. SecF subfamily. As to quaternary structure, part of the protein translocation apparatus. Forms a complex with SecD.

It localises to the cell membrane. Involved in protein export. The polypeptide is Protein-export membrane protein SecF (Thermococcus gammatolerans (strain DSM 15229 / JCM 11827 / EJ3)).